A 364-amino-acid polypeptide reads, in one-letter code: Uroporphyrinogen decarboxylase (364 aa).

Residues 49–53, Asp98, Tyr173, Ser228, and His341 contribute to the substrate site; that span reads RQAGR.

Belongs to the uroporphyrinogen decarboxylase family. Homodimer.

The protein resides in the cytoplasm. The enzyme catalyses uroporphyrinogen III + 4 H(+) = coproporphyrinogen III + 4 CO2. The protein operates within porphyrin-containing compound metabolism; protoporphyrin-IX biosynthesis; coproporphyrinogen-III from 5-aminolevulinate: step 4/4. Catalyzes the decarboxylation of four acetate groups of uroporphyrinogen-III to yield coproporphyrinogen-III. This Protochlamydia amoebophila (strain UWE25) protein is Uroporphyrinogen decarboxylase.